The chain runs to 140 residues: Small ribosomal subunit protein uS12 (140 aa).

Residues 33–55 form a disordered region; sequence KEQTNVSSPQKRGVCTRVGTMTP. 3-methylthioaspartic acid is present on D102.

It belongs to the universal ribosomal protein uS12 family. Part of the 30S ribosomal subunit. Contacts proteins S8 and S17. May interact with IF1 in the 30S initiation complex.

In terms of biological role, with S4 and S5 plays an important role in translational accuracy. Its function is as follows. Interacts with and stabilizes bases of the 16S rRNA that are involved in tRNA selection in the A site and with the mRNA backbone. Located at the interface of the 30S and 50S subunits, it traverses the body of the 30S subunit contacting proteins on the other side and probably holding the rRNA structure together. The combined cluster of proteins S8, S12 and S17 appears to hold together the shoulder and platform of the 30S subunit. The protein is Small ribosomal subunit protein uS12 of Geobacillus thermodenitrificans (strain NG80-2).